Reading from the N-terminus, the 129-residue chain is Small ribosomal subunit protein uS11 (129 aa).

The protein belongs to the universal ribosomal protein uS11 family. As to quaternary structure, part of the 30S ribosomal subunit. Interacts with proteins S7 and S18. Binds to IF-3.

Located on the platform of the 30S subunit, it bridges several disparate RNA helices of the 16S rRNA. Forms part of the Shine-Dalgarno cleft in the 70S ribosome. This Lactobacillus gasseri (strain ATCC 33323 / DSM 20243 / BCRC 14619 / CIP 102991 / JCM 1131 / KCTC 3163 / NCIMB 11718 / NCTC 13722 / AM63) protein is Small ribosomal subunit protein uS11.